The primary structure comprises 949 residues: Protein translocase subunit SecA 1 (949 aa).

ATP-binding positions include Gln86, 104-108 (GEGKT), and Asp493. The segment at 869–949 (VDGGARERAP…AKPPKSVKKR (81 aa)) is disordered. A compositionally biased stretch (basic and acidic residues) spans 925-934 (SRRERREAAR).

This sequence belongs to the SecA family. Monomer and homodimer. Part of the essential Sec protein translocation apparatus which comprises SecA, SecYEG and auxiliary proteins SecDF. Other proteins may also be involved.

The protein resides in the cell membrane. It localises to the cytoplasm. It carries out the reaction ATP + H2O + cellular proteinSide 1 = ADP + phosphate + cellular proteinSide 2.. Its function is as follows. Part of the Sec protein translocase complex. Interacts with the SecYEG preprotein conducting channel. Has a central role in coupling the hydrolysis of ATP to the transfer of proteins into and across the cell membrane, serving as an ATP-driven molecular motor driving the stepwise translocation of polypeptide chains across the membrane. This is Protein translocase subunit SecA 1 from Mycobacterium bovis (strain ATCC BAA-935 / AF2122/97).